The chain runs to 184 residues: ATP synthase subunit delta (184 aa).

The protein belongs to the ATPase delta chain family. F-type ATPases have 2 components, F(1) - the catalytic core - and F(0) - the membrane proton channel. F(1) has five subunits: alpha(3), beta(3), gamma(1), delta(1), epsilon(1). F(0) has three main subunits: a(1), b(2) and c(10-14). The alpha and beta chains form an alternating ring which encloses part of the gamma chain. F(1) is attached to F(0) by a central stalk formed by the gamma and epsilon chains, while a peripheral stalk is formed by the delta and b chains.

The protein localises to the cell inner membrane. F(1)F(0) ATP synthase produces ATP from ADP in the presence of a proton or sodium gradient. F-type ATPases consist of two structural domains, F(1) containing the extramembraneous catalytic core and F(0) containing the membrane proton channel, linked together by a central stalk and a peripheral stalk. During catalysis, ATP synthesis in the catalytic domain of F(1) is coupled via a rotary mechanism of the central stalk subunits to proton translocation. Functionally, this protein is part of the stalk that links CF(0) to CF(1). It either transmits conformational changes from CF(0) to CF(1) or is implicated in proton conduction. The chain is ATP synthase subunit delta from Rickettsia massiliae (strain Mtu5).